Consider the following 396-residue polypeptide: Acetyl-CoA acetyltransferase (396 aa).

Cysteine 89 serves as the catalytic Acyl-thioester intermediate. CoA-binding positions include 223-225 (RKS) and serine 249. Catalysis depends on proton acceptor residues histidine 352 and cysteine 382.

Belongs to the thiolase-like superfamily. Thiolase family.

The protein resides in the cytoplasm. The enzyme catalyses 2 acetyl-CoA = acetoacetyl-CoA + CoA. Its pathway is lipid metabolism; butanoate metabolism. In terms of biological role, involved in syntrophic growth of S.wolfei with butyrate, as part of the butyrate oxidation pathway. Probably catalyzes the beta-keto thiolysis of acetoacetyl-CoA, leading to 2 acetyl-CoA molecules. This chain is Acetyl-CoA acetyltransferase, found in Syntrophomonas wolfei subsp. wolfei (strain DSM 2245B / Goettingen).